The sequence spans 292 residues: 3-methyl-2-oxobutanoate hydroxymethyltransferase 2 (292 aa).

The Mg(2+) site is built by D52 and D91. 3-methyl-2-oxobutanoate-binding positions include 52–53 (DS), D91, and K120. Position 122 (E122) interacts with Mg(2+). The active-site Proton acceptor is the E189.

It belongs to the PanB family. In terms of assembly, homodecamer; pentamer of dimers. Mg(2+) is required as a cofactor.

The protein resides in the cytoplasm. It carries out the reaction 3-methyl-2-oxobutanoate + (6R)-5,10-methylene-5,6,7,8-tetrahydrofolate + H2O = 2-dehydropantoate + (6S)-5,6,7,8-tetrahydrofolate. The protein operates within cofactor biosynthesis; (R)-pantothenate biosynthesis; (R)-pantoate from 3-methyl-2-oxobutanoate: step 1/2. Functionally, catalyzes the reversible reaction in which hydroxymethyl group from 5,10-methylenetetrahydrofolate is transferred onto alpha-ketoisovalerate to form ketopantoate. The sequence is that of 3-methyl-2-oxobutanoate hydroxymethyltransferase 2 from Bradyrhizobium diazoefficiens (strain JCM 10833 / BCRC 13528 / IAM 13628 / NBRC 14792 / USDA 110).